Reading from the N-terminus, the 198-residue chain is Protein GrpE (198 aa).

Residues 1–14 are compositionally biased toward basic and acidic residues; that stretch reads MSNEENKINEEALK. Residues 1-20 are disordered; it reads MSNEENKINEEALKQQDAAE.

The protein belongs to the GrpE family. As to quaternary structure, homodimer.

Its subcellular location is the cytoplasm. Functionally, participates actively in the response to hyperosmotic and heat shock by preventing the aggregation of stress-denatured proteins, in association with DnaK and GrpE. It is the nucleotide exchange factor for DnaK and may function as a thermosensor. Unfolded proteins bind initially to DnaJ; upon interaction with the DnaJ-bound protein, DnaK hydrolyzes its bound ATP, resulting in the formation of a stable complex. GrpE releases ADP from DnaK; ATP binding to DnaK triggers the release of the substrate protein, thus completing the reaction cycle. Several rounds of ATP-dependent interactions between DnaJ, DnaK and GrpE are required for fully efficient folding. The protein is Protein GrpE of Vibrio vulnificus (strain YJ016).